We begin with the raw amino-acid sequence, 149 residues long: Protein SprT-like (149 aa).

In terms of domain architecture, SprT-like spans 4–143 (TDYVKQVSLE…CGLCRGKLLL (140 aa)). H64 lines the Zn(2+) pocket. The active site involves E65. Zn(2+) is bound at residue H68.

Belongs to the SprT family. Zn(2+) is required as a cofactor.

The protein localises to the cytoplasm. The protein is Protein SprT-like of Streptococcus pneumoniae (strain JJA).